The following is a 255-amino-acid chain: 4-hydroxy-tetrahydrodipicolinate reductase (255 aa).

NAD(+) contacts are provided by residues 9–14 (GFKGKM), 89–91 (GTT), and 115–118 (APNF). The active-site Proton donor/acceptor is the His145. His146 provides a ligand contact to (S)-2,3,4,5-tetrahydrodipicolinate. Lys149 (proton donor) is an active-site residue. (S)-2,3,4,5-tetrahydrodipicolinate is bound at residue 155 to 156 (GT).

It belongs to the DapB family.

It localises to the cytoplasm. It carries out the reaction (S)-2,3,4,5-tetrahydrodipicolinate + NAD(+) + H2O = (2S,4S)-4-hydroxy-2,3,4,5-tetrahydrodipicolinate + NADH + H(+). It catalyses the reaction (S)-2,3,4,5-tetrahydrodipicolinate + NADP(+) + H2O = (2S,4S)-4-hydroxy-2,3,4,5-tetrahydrodipicolinate + NADPH + H(+). It participates in amino-acid biosynthesis; L-lysine biosynthesis via DAP pathway; (S)-tetrahydrodipicolinate from L-aspartate: step 4/4. Functionally, catalyzes the conversion of 4-hydroxy-tetrahydrodipicolinate (HTPA) to tetrahydrodipicolinate. The polypeptide is 4-hydroxy-tetrahydrodipicolinate reductase (Streptococcus suis (strain 98HAH33)).